The primary structure comprises 113 residues: U11-theraphotoxin-Hhn1a (113 aa).

The first 21 residues, 1-21 (MNTVRVTFLLVFVLAVSLGQT), serve as a signal peptide directing secretion. Positions 22–74 (DKDENRMEMQEKTEQGKSYLDFAENLLLQKLEELEAKLLEEDSEESRNSRQKR) are excised as a propeptide. 3 cysteine pairs are disulfide-bonded: C75/C90, C82/C95, and C89/C110.

The protein belongs to the neurotoxin 14 (magi-1) family. 01 (HNTX-16) subfamily. As to expression, expressed by the venom gland.

It is found in the secreted. In terms of biological role, probable ion channel inhibitor. This is U11-theraphotoxin-Hhn1a from Cyriopagopus hainanus (Chinese bird spider).